Here is a 285-residue protein sequence, read N- to C-terminus: NAD kinase (285 aa).

The active-site Proton acceptor is Asp76. Residues 76–77 (DG), 151–152 (NE), His162, Arg179, Asp181, 192–197 (TAYSLS), and Gln252 each bind NAD(+).

This sequence belongs to the NAD kinase family. Requires a divalent metal cation as cofactor.

It is found in the cytoplasm. It catalyses the reaction NAD(+) + ATP = ADP + NADP(+) + H(+). Involved in the regulation of the intracellular balance of NAD and NADP, and is a key enzyme in the biosynthesis of NADP. Catalyzes specifically the phosphorylation on 2'-hydroxyl of the adenosine moiety of NAD to yield NADP. The chain is NAD kinase from Haemophilus influenzae (strain ATCC 51907 / DSM 11121 / KW20 / Rd).